A 334-amino-acid polypeptide reads, in one-letter code: Galactinol synthase 3 (334 aa).

Lysine 97 is a catalytic residue. Positions 113, 115, and 251 each coordinate Mn(2+).

Belongs to the glycosyltransferase 8 family. Galactosyltransferase subfamily. It depends on a divalent metal cation as a cofactor.

It is found in the cytoplasm. The enzyme catalyses myo-inositol + UDP-alpha-D-galactose = alpha-D-galactosyl-(1-&gt;3)-1D-myo-inositol + UDP + H(+). Functionally, galactinol synthase involved in the biosynthesis of raffinose family oligosaccharides (RFOs) that function as osmoprotectants. May promote plant stress tolerance. The polypeptide is Galactinol synthase 3 (GOLS3) (Arabidopsis thaliana (Mouse-ear cress)).